Consider the following 967-residue polypeptide: uncharacterized protein (967 aa).

The first 29 residues, 1 to 29 (MKKKLKSVLIWFLIFTFNLSLGSFREVFA), serve as a signal peptide directing secretion. BIG2 domains lie at 38-107 (TAIT…QDGS) and 133-190 (LPVG…VNDG).

This is an uncharacterized protein from Clostridium acetobutylicum (strain ATCC 824 / DSM 792 / JCM 1419 / IAM 19013 / LMG 5710 / NBRC 13948 / NRRL B-527 / VKM B-1787 / 2291 / W).